Reading from the N-terminus, the 526-residue chain is MGKVIRSLNRFGKKVGNALTSNTAKKIYSTIGKAADEFLESEIGSAAIDGLVQGSVHSIITGESYGESVKQAVLLNVLGSGEEIPDPLSPGERGIQAKLKELEDEQRNELVRLKYNDKIKEKFEKELEEVYNFYNGEANAEIEDEKQFDILNKAVTSYNKILTEEDLQNRRLATRLQKEIGERTHAETVMVKEYRDKIDALKNAIEVERDGMQEEAIQEIAGMTADVLEAASEEVPLIGAGMATAVATGRAIEGAYKLKKVINALSGIDLTHFTHYENRPSVVSTILEYRAKEIPDNALAVSVLIKERAIQENHKELMHIKNEILPRFKKAMDEEKEIMRDRRQMIHPKVMMKFKIPRAQQPQIHVYSAPWDSDDVFFFHCISHHHANDSFFLGFDLSIDLVHYEDLTAHAHAIGAAQTAAGRTLTEAYREFLNLAISKAFGTQMHTRRLVRSKTVHPIYLGSLHYDISFSDLRGNAQRIVYDDELQMHILRGPIHFQRRAILGALKFGCKVLGDRLDVPLFLRNA.

An involved in membrane permeabilization region spans residues 1–42 (MGKVIRSLNRFGKKVGNALTSNTAKKIYSTIGKAADEFLESE).

It belongs to the orbivirus VP5 family.

It localises to the virion. In terms of biological role, VP5 protein is one of the two proteins (with VP2) which constitute the virus particle outer capsid. Acts as a membrane permeabilization protein that mediates release of viral particles from endosomal compartments into the cytoplasm. Permeabilization activity is probably negatively regulated by VP2 and is triggered by endosomal degradation of VP2 and exposure to low pH. In Bluetongue virus 1 (isolate South Africa) (BTV 1), this protein is Outer capsid protein VP5 (Segment-6).